The following is a 76-amino-acid chain: Alpha/kappa-conotoxin-like fe14.1 (76 aa).

An N-terminal signal peptide occupies residues 1-24 (MPSVRSVTCCCLLWMMLSVQLVTP). Positions 25–39 (GSPGTAQLSGHRTAR) are excised as a propeptide. 2 cysteine pairs are disulfide-bonded: Cys46-Cys61 and Cys50-Cys63. The residue at position 64 (Arg64) is an Arginine amide. Positions 65-76 (GKRDVVSSSMAV) are excised as a propeptide.

Belongs to the conotoxin J superfamily. In terms of tissue distribution, expressed by the venom duct.

The protein localises to the secreted. In terms of biological role, highly inhibits both nicotinic acetylcholine receptors (neuronal (alpha-3/beta-4) and muscular (alpha-1/beta-1/epsilon/delta) subtypes) and the voltage-gated potassium channel Kv1.6/KCNA6 subtype. The sequence is that of Alpha/kappa-conotoxin-like fe14.1 from Conus ferrugineus (Cone snail).